Here is a 271-residue protein sequence, read N- to C-terminus: S-adenosylmethionine decarboxylase proenzyme (271 aa).

The active-site Schiff-base intermediate with substrate; via pyruvic acid is the Ser121. Ser121 is modified (pyruvic acid (Ser); by autocatalysis). The active-site Proton acceptor; for processing activity is His126. Residue Cys149 is the Proton donor; for catalytic activity of the active site.

The protein belongs to the prokaryotic AdoMetDC family. Type 2 subfamily. Heterooctamer of four alpha and four beta chains arranged as a tetramer of alpha/beta heterodimers. Pyruvate serves as cofactor. Post-translationally, is synthesized initially as an inactive proenzyme. Formation of the active enzyme involves a self-maturation process in which the active site pyruvoyl group is generated from an internal serine residue via an autocatalytic post-translational modification. Two non-identical subunits are generated from the proenzyme in this reaction, and the pyruvate is formed at the N-terminus of the alpha chain, which is derived from the carboxyl end of the proenzyme. The post-translation cleavage follows an unusual pathway, termed non-hydrolytic serinolysis, in which the side chain hydroxyl group of the serine supplies its oxygen atom to form the C-terminus of the beta chain, while the remainder of the serine residue undergoes an oxidative deamination to produce ammonia and the pyruvoyl group blocking the N-terminus of the alpha chain.

It carries out the reaction S-adenosyl-L-methionine + H(+) = S-adenosyl 3-(methylsulfanyl)propylamine + CO2. The protein operates within amine and polyamine biosynthesis; S-adenosylmethioninamine biosynthesis; S-adenosylmethioninamine from S-adenosyl-L-methionine: step 1/1. Catalyzes the decarboxylation of S-adenosylmethionine to S-adenosylmethioninamine (dcAdoMet), the propylamine donor required for the synthesis of the polyamines spermine and spermidine from the diamine putrescine. This chain is S-adenosylmethionine decarboxylase proenzyme, found in Clostridium perfringens (strain ATCC 13124 / DSM 756 / JCM 1290 / NCIMB 6125 / NCTC 8237 / Type A).